Reading from the N-terminus, the 277-residue chain is Ribonuclease HII (277 aa).

Positions 72-260 (EYIAGIDEAG…IKEMIEMKKE (189 aa)) constitute an RNase H type-2 domain. The a divalent metal cation site is built by aspartate 78, glutamate 79, and aspartate 170.

Belongs to the RNase HII family. Mn(2+) is required as a cofactor. It depends on Mg(2+) as a cofactor.

The protein localises to the cytoplasm. It catalyses the reaction Endonucleolytic cleavage to 5'-phosphomonoester.. Functionally, endonuclease that specifically degrades the RNA of RNA-DNA hybrids. The polypeptide is Ribonuclease HII (Geobacillus sp. (strain WCH70)).